The primary structure comprises 286 residues: MNIAIVTINQENAAIASWLAAQDFSGCTLAHWQIEPQPVVAEQVLDALVEQWQRTPADVVLFPPGTFGDELSTRLAWRLHGASICQVTSLDIPTVSVRKSHWGNALTATLQTEKRPLCLSLARQAGAAKNATLPSGMQQLNIVPGALPDWLVSTEDLKNVTRDPLAEARRVLVVGQGGEADNQEIAMLAEKLGAEVGYSRARVMNGGVDAEKVIGISGHLLAPEVCIVVGASGAAALMAGVRNSKFVVAINHDASAAVFSQADVGVVDDWKVVLEALVTNIHADCQ.

Residue 225–253 coordinates FAD; sequence VCIVVGASGAAALMAGVRNSKFVVAINHD.

It belongs to the ETF alpha-subunit/FixB family. As to quaternary structure, ygcQ and YgcR form a heterodimer.

Its function is as follows. May play a role in a redox process. This chain is Putative electron transfer flavoprotein subunit YgcQ (ygcQ), found in Escherichia coli (strain K12).